The chain runs to 249 residues: MRVLVCKDYDGMSKKAAEMIAAQIVLKPNSILGLATGSTPVGMYRDLVKKYNDNIVDFSDVMSFNLDEYYKLPISNDQSYDYFMKENLFNHVNIKPENTHLPNGMADDIEKECMNYEASIDAAGGIDVQVLGIGRNAHIGFNEPDTKFAKRTHVVELTESTIEANARFFKSREDVPKKAVSMGIGSILKSKKILLLASGEEKADAVYNTVYGDITPEVPGSILQLHKDTIVIVDEAAASKLNPKDYKLV.

Asp-67 acts as the Proton acceptor; for enolization step in catalysis. Asn-136 functions as the For ring-opening step in the catalytic mechanism. The Proton acceptor; for ring-opening step role is filled by His-138. The active-site For ring-opening step is the Glu-143.

It belongs to the glucosamine/galactosamine-6-phosphate isomerase family. NagB subfamily.

The enzyme catalyses alpha-D-glucosamine 6-phosphate + H2O = beta-D-fructose 6-phosphate + NH4(+). It participates in amino-sugar metabolism; N-acetylneuraminate degradation; D-fructose 6-phosphate from N-acetylneuraminate: step 5/5. Functionally, catalyzes the reversible isomerization-deamination of glucosamine 6-phosphate (GlcN6P) to form fructose 6-phosphate (Fru6P) and ammonium ion. In Clostridioides difficile (strain 630) (Peptoclostridium difficile), this protein is Glucosamine-6-phosphate deaminase.